Reading from the N-terminus, the 743-residue chain is Threonine--tRNA ligase (743 aa).

A compositionally biased stretch (low complexity) spans 1–15 (MSADSPSSPASSQAA). The tract at residues 1–30 (MSADSPSSPASSQAAEVQVRLPDGSLKTQP) is disordered. The 64-residue stretch at 13 to 76 (QAAEVQVRLP…GEIADDENVV (64 aa)) folds into the TGS domain. Residues 264 to 619 (DHRVLGKQHG…LIEHFAGAFP (356 aa)) are catalytic. Residues 354-404 (AWSTRLDKDDLSKDDEDKLIAAAEVFGVKLPDYKPSASNDAKKDVLHRWQL) form an insert region. The Zn(2+) site is built by cysteine 416, histidine 467, and histidine 596.

Belongs to the class-II aminoacyl-tRNA synthetase family. Homodimer. The cofactor is Zn(2+).

Its subcellular location is the cytoplasm. It carries out the reaction tRNA(Thr) + L-threonine + ATP = L-threonyl-tRNA(Thr) + AMP + diphosphate + H(+). Functionally, catalyzes the attachment of threonine to tRNA(Thr) in a two-step reaction: L-threonine is first activated by ATP to form Thr-AMP and then transferred to the acceptor end of tRNA(Thr). Also edits incorrectly charged L-seryl-tRNA(Thr). The protein is Threonine--tRNA ligase of Rhodopirellula baltica (strain DSM 10527 / NCIMB 13988 / SH1).